The primary structure comprises 769 residues: Serine protease HtrA-like (769 aa).

Residues 1-20 (MDIGKKHVIPKSQYRRKRRE) show a composition bias toward basic residues. The tract at residues 1-390 (MDIGKKHVIP…ATSKLNKGRA (390 aa)) is disordered. Basic and acidic residues-rich tracts occupy residues 21–64 (FFHN…ERFK) and 71–108 (LEQR…DVSK). The segment covering 126 to 137 (YEQNSEATLSTK) has biased composition (polar residues). Positions 138 to 186 (STDKVESTEMRKLSSDKNKVGHEEQHVLSKPSEHDKETRIDSESSRTDS) are enriched in basic and acidic residues. Polar residues predominate over residues 247–262 (QQSQNEQTKTYTYGDS). Composition is skewed to basic and acidic residues over residues 264 to 296 (QNDK…HIVD) and 310 to 330 (KTDD…HKQN). Over residues 331–347 (ADSSETVGYQSQSTASH) the composition is skewed to polar residues. The segment covering 348 to 364 (RSTEKRNISINDHDKLN) has biased composition (basic and acidic residues). A compositionally biased stretch (polar residues) spans 365–390 (GQKTNTKTSANNNQKKATSKLNKGRA). A helical membrane pass occupies residues 410-430 (LVILMGIIILIVILNAIFNNV). Catalysis depends on charge relay system residues histidine 504, aspartate 534, and serine 619. The region spanning 680–733 (IASLNSFERQAVKLPGKVKNGVVVDQVDNNGLADQSGLKKGDVITELDGKLLED) is the PDZ domain.

The protein belongs to the peptidase S1C family.

Its subcellular location is the cell membrane. The chain is Serine protease HtrA-like from Staphylococcus aureus (strain USA300).